A 300-amino-acid polypeptide reads, in one-letter code: MPSLTMTDSSYIGRFAPTPSGFLHFGSLVAALASWLDARAVNGRWLLRMEDTDPPREMPGARDAILQTLERYGLHWDGEVVFQSQRHDAYAAVVDRLFNMGLAYACTCSRKQLERYNGIYPGFCRNAGHAREGAAIRLRVPELIYRFTDRVQGEYQQHLGREVGDFVIQRRDGLYAYQLAVVLDDAWQGVTDIVRGADLLDNTPRQLYLQELLGFSQPRYLHIPLIVQPDGHKLGKSYRSPPLQAEHATPLLLRALRALGQETDPELLLATPAEVLAVARTQWRPEAIAQRTTVPEADLR.

Residues 14-18 and glutamate 50 each bind L-glutamate; that span reads RFAPT. The 'HIGH' region motif lies at 17–27; sequence PTPSGFLHFGS. The Zn(2+) site is built by cysteine 106, cysteine 108, tyrosine 120, and cysteine 124. L-glutamate-binding residues include tyrosine 177 and arginine 195. The 'KMSKS' region motif lies at 233–237; the sequence is KLGKS. An ATP-binding site is contributed by lysine 236.

This sequence belongs to the class-I aminoacyl-tRNA synthetase family. GluQ subfamily. The cofactor is Zn(2+).

Its function is as follows. Catalyzes the tRNA-independent activation of glutamate in presence of ATP and the subsequent transfer of glutamate onto a tRNA(Asp). Glutamate is transferred on the 2-amino-5-(4,5-dihydroxy-2-cyclopenten-1-yl) moiety of the queuosine in the wobble position of the QUC anticodon. This chain is Glutamyl-Q tRNA(Asp) synthetase, found in Pseudomonas putida (strain ATCC 700007 / DSM 6899 / JCM 31910 / BCRC 17059 / LMG 24140 / F1).